Reading from the N-terminus, the 145-residue chain is Large ribosomal subunit protein uL13 (145 aa).

This sequence belongs to the universal ribosomal protein uL13 family. Part of the 50S ribosomal subunit.

This protein is one of the early assembly proteins of the 50S ribosomal subunit, although it is not seen to bind rRNA by itself. It is important during the early stages of 50S assembly. This Macrococcus caseolyticus (strain JCSC5402) (Macrococcoides caseolyticum) protein is Large ribosomal subunit protein uL13.